Reading from the N-terminus, the 442-residue chain is tRNA-2-methylthio-N(6)-dimethylallyladenosine synthase (442 aa).

The MTTase N-terminal domain maps to 3–120 (KKLYIETHGC…LPEMIDAARI (118 aa)). [4Fe-4S] cluster-binding residues include Cys12, Cys49, Cys83, Cys157, Cys161, and Cys164. The 233-residue stretch at 143 to 375 (RVDGPSAYVS…QHRLNQQGFE (233 aa)) folds into the Radical SAM core domain. In terms of domain architecture, TRAM spans 378–442 (RQMVGSIQRI…PHSLRGSLLQ (65 aa)).

The protein belongs to the methylthiotransferase family. MiaB subfamily. Monomer. It depends on [4Fe-4S] cluster as a cofactor.

It localises to the cytoplasm. It catalyses the reaction N(6)-dimethylallyladenosine(37) in tRNA + (sulfur carrier)-SH + AH2 + 2 S-adenosyl-L-methionine = 2-methylsulfanyl-N(6)-dimethylallyladenosine(37) in tRNA + (sulfur carrier)-H + 5'-deoxyadenosine + L-methionine + A + S-adenosyl-L-homocysteine + 2 H(+). Functionally, catalyzes the methylthiolation of N6-(dimethylallyl)adenosine (i(6)A), leading to the formation of 2-methylthio-N6-(dimethylallyl)adenosine (ms(2)i(6)A) at position 37 in tRNAs that read codons beginning with uridine. The chain is tRNA-2-methylthio-N(6)-dimethylallyladenosine synthase from Pseudomonas savastanoi pv. phaseolicola (strain 1448A / Race 6) (Pseudomonas syringae pv. phaseolicola (strain 1448A / Race 6)).